The sequence spans 249 residues: Segregation and condensation protein A (249 aa).

It belongs to the ScpA family. As to quaternary structure, component of a cohesin-like complex composed of ScpA, ScpB and the Smc homodimer, in which ScpA and ScpB bind to the head domain of Smc. The presence of the three proteins is required for the association of the complex with DNA.

Its subcellular location is the cytoplasm. Participates in chromosomal partition during cell division. May act via the formation of a condensin-like complex containing Smc and ScpB that pull DNA away from mid-cell into both cell halves. In Clostridium acetobutylicum (strain ATCC 824 / DSM 792 / JCM 1419 / IAM 19013 / LMG 5710 / NBRC 13948 / NRRL B-527 / VKM B-1787 / 2291 / W), this protein is Segregation and condensation protein A.